The following is an 80-amino-acid chain: Myrmicitoxin(1)-Pr1a (80 aa).

The signal sequence occupies residues 1–23 (MEIPKLLYIAVIAIGLSGSLTWA). Positions 24-57 (TPLANPLAEAEAEAKATAEATAEALAEALAEPEP) are excised as a propeptide. Residue F79 is modified to Phenylalanine amide.

This sequence belongs to the formicidae venom clade 1 family. In terms of tissue distribution, expressed by the venom gland.

Its subcellular location is the secreted. In terms of biological role, vertebrate-selective toxin that causes pain by targeting voltage-gated sodium channels. The protein is Myrmicitoxin(1)-Pr1a of Pogonomyrmex rugosus (Desert harvester ant).